A 346-amino-acid chain; its full sequence is Putative toluene-4-sulfonate monooxygenase system iron-sulfur subunit TsaM2 (346 aa).

Residues 7–108 (WYVAGMATDC…LVERHGLLWI (102 aa)) form the Rieske domain. Positions 47, 49, 66, and 69 each coordinate [2Fe-2S] cluster.

As to quaternary structure, homotetramer. Part of the p-toluenesulfonate methyl-monooxygenase complex TsaBM, comprising the reductase TsaB and the oxygenase TsaM. The cofactor is [2Fe-2S] cluster.

The enzyme catalyses toluene-4-sulfonate + NADH + O2 + H(+) = 4-(hydroxymethyl)benzenesulfonate + NAD(+) + H2O. Its function is as follows. Involved in the toluene-4-sulfonate degradation pathway. Does not discriminate between the sulfonate and the carboxyl substituents and can also be involved in the p-toluenecarboxylate degradation pathway. The polypeptide is Putative toluene-4-sulfonate monooxygenase system iron-sulfur subunit TsaM2 (tsaM2) (Comamonas testosteroni (Pseudomonas testosteroni)).